We begin with the raw amino-acid sequence, 190 residues long: Surfactant protein C (190 aa).

Positions 1 to 23 are excised as a propeptide; sequence MDVGSKEVLIENPPDYSAAPQGR. Cys28 carries the S-palmitoyl cysteine lipid modification. The propeptide occupies 59-190; that stretch reads HMSQKHTEMV…LCGEVPLYYI (132 aa). Positions 94–190 constitute a BRICHOS domain; it reads FSIGSTGIVV…LCGEVPLYYI (97 aa). A disulfide bridge connects residues Cys121 and Cys182.

Its subcellular location is the secreted. It is found in the extracellular space. It localises to the surface film. Functionally, pulmonary surfactant associated proteins promote alveolar stability by lowering the surface tension at the air-liquid interface in the peripheral air spaces. The chain is Surfactant protein C (SFTPC) from Neovison vison (American mink).